The sequence spans 189 residues: MGLADFKDVDRNELSMIEVAHAILEDRGERMAFADIVNEVQKYLNKSDEEIRQRLPQFYTDMNTDGRFISMGENVWALRTWFKFEAVDEEVDHPEDDGDEESTRKHHKKVNAFLATTEGDDVIDYENDDPEDEDLSDDSDADEDDADDNSGDDYDDNEDDDDDDSLLDGIEDQLSQMDDDDLDDDEDEE.

An HTH HARE-type domain is found at 14-81 (LSMIEVAHAI…GENVWALRTW (68 aa)). Acidic residues-rich tracts occupy residues 90 to 100 (EVDHPEDDGDE) and 118 to 189 (EGDD…EDEE). The segment at 90-189 (EVDHPEDDGD…DDLDDDEDEE (100 aa)) is disordered.

It belongs to the RpoE family. In terms of assembly, RNAP is composed of a core of 2 alpha, a beta and a beta' subunits. The core is associated with a delta subunit and one of several sigma factors.

Participates in both the initiation and recycling phases of transcription. In the presence of the delta subunit, RNAP displays an increased specificity of transcription, a decreased affinity for nucleic acids, and an increased efficiency of RNA synthesis because of enhanced recycling. In Lactobacillus delbrueckii subsp. bulgaricus (strain ATCC 11842 / DSM 20081 / BCRC 10696 / JCM 1002 / NBRC 13953 / NCIMB 11778 / NCTC 12712 / WDCM 00102 / Lb 14), this protein is Probable DNA-directed RNA polymerase subunit delta.